Here is a 547-residue protein sequence, read N- to C-terminus: Serine beta-lactamase-like protein LACTB, mitochondrial (547 aa).

Residues 1–115 constitute a mitochondrion transit peptide; sequence MYRLMSAVTA…RAIESSRDLL (115 aa). The span at 62–83 shows a compositional bias: low complexity; sequence GAAPAQSPAAPDPEASPLAEPP. The disordered stretch occupies residues 62 to 96; the sequence is GAAPAQSPAAPDPEASPLAEPPQEQSLAPWSPQTP. Residue S164 is the Acyl-ester intermediate of the active site. N6-succinyllysine is present on residues K283 and K284. N6-acetyllysine is present on residues K297 and K342.

This sequence belongs to the peptidase S12 family. As to expression, expressed predominantly in skeletal muscle.

Its subcellular location is the mitochondrion. Functionally, mitochondrial serine protease that acts as a regulator of mitochondrial lipid metabolism. Acts by decreasing protein levels of PISD, a mitochondrial enzyme that converts phosphatidylserine (PtdSer) to phosphatidylethanolamine (PtdEtn), thereby affecting mitochondrial lipid metabolism. It is unclear whether it acts directly by mediating proteolysis of PISD or by mediating proteolysis of another lipid metabolism protein. Acts as a tumor suppressor that has the ability to inhibit proliferation of multiple types of breast cancer cells: probably by promoting decreased levels of PISD, thereby affecting mitochondrial lipid metabolism. This chain is Serine beta-lactamase-like protein LACTB, mitochondrial, found in Homo sapiens (Human).